An 809-amino-acid chain; its full sequence is Putative zinc metalloprotease TRE2 (809 aa).

2 stretches are compositionally biased toward polar residues: residues 1–12 (MRSSYQPVSTTN) and 20–30 (PTASSSHNLLM). Positions 1–66 (MRSSYQPVST…PSYEFDIEDP (66 aa)) are disordered. The Cytoplasmic portion of the chain corresponds to 1 to 125 (MRSSYQPVST…KIGNPFILRR (125 aa)). Positions 37–50 (SPPSSNDNSIETNI) are enriched in low complexity. A helical; Signal-anchor for type II membrane protein transmembrane segment spans residues 126 to 146 (FFYIIFMSFIAYYVLSSGYLF). The Extracellular segment spans residues 147-809 (NEKASGSKGM…VEETNDIGYK (663 aa)). A glycan (N-linked (GlcNAc...) asparagine) is linked at N228. Residues 255–349 (SNGKLSKVSL…STGDASGLNW (95 aa)) enclose the PA domain. N669 and N736 each carry an N-linked (GlcNAc...) asparagine glycan.

It belongs to the peptidase M28 family. M28B subfamily.

It is found in the membrane. The chain is Putative zinc metalloprotease TRE2 (TRE2) from Saccharomyces cerevisiae (strain ATCC 204508 / S288c) (Baker's yeast).